Here is a 491-residue protein sequence, read N- to C-terminus: uncharacterized protein (491 aa).

A substrate-binding site is contributed by tryptophan 99. Asparagine 137 lines the Ca(2+) pocket. Substrate is bound at residue histidine 138. The Ca(2+) site is built by glutamate 177 and aspartate 190. Arginine 219 is a substrate binding site. Ca(2+) is bound by residues aspartate 221, histidine 225, and glutamate 245. Residue aspartate 221 is the Nucleophile of the active site. 224 to 225 (KH) lines the substrate pocket. The active-site Proton donor is glutamate 245. Substrate is bound by residues glycine 249, histidine 312, and arginine 360.

The protein belongs to the glycosyl hydrolase 13 family. Ca(2+) is required as a cofactor.

The protein resides in the cytoplasm. It localises to the nucleus. This is an uncharacterized protein from Schizosaccharomyces pombe (strain 972 / ATCC 24843) (Fission yeast).